Here is a 577-residue protein sequence, read N- to C-terminus: Sulfite reductase [NADPH] hemoprotein beta-component (577 aa).

The [4Fe-4S] cluster site is built by cysteine 440, cysteine 446, cysteine 486, and cysteine 490. Cysteine 490 provides a ligand contact to siroheme.

The protein belongs to the nitrite and sulfite reductase 4Fe-4S domain family. Alpha(8)-beta(8). The alpha component is a flavoprotein, the beta component is a hemoprotein. The cofactor is siroheme. Requires [4Fe-4S] cluster as cofactor.

The enzyme catalyses hydrogen sulfide + 3 NADP(+) + 3 H2O = sulfite + 3 NADPH + 4 H(+). The protein operates within sulfur metabolism; hydrogen sulfide biosynthesis; hydrogen sulfide from sulfite (NADPH route): step 1/1. In terms of biological role, component of the sulfite reductase complex that catalyzes the 6-electron reduction of sulfite to sulfide. This is one of several activities required for the biosynthesis of L-cysteine from sulfate. This Vibrio cholerae serotype O1 (strain ATCC 39315 / El Tor Inaba N16961) protein is Sulfite reductase [NADPH] hemoprotein beta-component.